The following is a 418-amino-acid chain: Gamma-glutamyl phosphate reductase (418 aa).

Belongs to the gamma-glutamyl phosphate reductase family.

It is found in the cytoplasm. The enzyme catalyses L-glutamate 5-semialdehyde + phosphate + NADP(+) = L-glutamyl 5-phosphate + NADPH + H(+). It participates in amino-acid biosynthesis; L-proline biosynthesis; L-glutamate 5-semialdehyde from L-glutamate: step 2/2. Catalyzes the NADPH-dependent reduction of L-glutamate 5-phosphate into L-glutamate 5-semialdehyde and phosphate. The product spontaneously undergoes cyclization to form 1-pyrroline-5-carboxylate. The protein is Gamma-glutamyl phosphate reductase of Chlorobium chlorochromatii (strain CaD3).